A 609-amino-acid polypeptide reads, in one-letter code: MCGIFGYIGAKLAVPVVLDGLAKLEYRGYDSAGLAAVIPERLFVRKTVGRVDELRSSLEKENVPSSLAIGHTRWATHGVPTVKNAHPHVDENSACAIVHNGIIDNFKELRSLLISEGISFSSDTDSEVIAQLFAFRYQATGDLVHSFSWTLSQLQGSFSCGLIHKDHPNVLLCAAQESPLIIGLGEKESFIASDARAFLKHTKSIQALASGELAVVGLGSEVETYNFALKRIHKEVRQVVYTDADSDKQGYSYYMLKEIYEQPEVLERLIHKYLDQQGCISEKFLNGFSIEDFDEISIVACGSSYHAGFLAKYIIESLVSIPVHVEVASEFRYRQAYIGKKTLAILISQSGETADTLAALKEFRRRQVACVLGICNVEESALATGVDHCLFLEAGIEIGVASTKAFTAQLLLLILLGLKLATLKQTLSLEEHRACGKGLFELPELCNRLLANENLHSWANDYCDEDRFIFLGRRLMYPICMEAALKLKEIAYVEANCYPAGEMKHGPIALISQGSPVITFCGDPVVYEKMVGCIMEVKARQAHVIAVASESQEDIAAVSDAQIYVPNSHPLVSPILYTIVGQIMAYTMALKKGYEIDRPRNLAKSVTVE.

Cys-2 functions as the Nucleophile; for GATase activity in the catalytic mechanism. The Glutamine amidotransferase type-2 domain maps to 2–219 (CGIFGYIGAK…SGELAVVGLG (218 aa)). SIS domains are found at residues 280-426 (ISEK…LKQT) and 458-599 (WAND…IDRP). Lys-604 serves as the catalytic For Fru-6P isomerization activity.

In terms of assembly, homodimer.

It localises to the cytoplasm. It carries out the reaction D-fructose 6-phosphate + L-glutamine = D-glucosamine 6-phosphate + L-glutamate. Its function is as follows. Catalyzes the first step in hexosamine metabolism, converting fructose-6P into glucosamine-6P using glutamine as a nitrogen source. The protein is Glutamine--fructose-6-phosphate aminotransferase [isomerizing] of Chlamydia caviae (strain ATCC VR-813 / DSM 19441 / 03DC25 / GPIC) (Chlamydophila caviae).